The sequence spans 103 residues: Large ribosomal subunit protein uL24 (103 aa).

The protein belongs to the universal ribosomal protein uL24 family. As to quaternary structure, part of the 50S ribosomal subunit.

Functionally, one of two assembly initiator proteins, it binds directly to the 5'-end of the 23S rRNA, where it nucleates assembly of the 50S subunit. Its function is as follows. One of the proteins that surrounds the polypeptide exit tunnel on the outside of the subunit. The chain is Large ribosomal subunit protein uL24 from Bacillus mycoides (strain KBAB4) (Bacillus weihenstephanensis).